The following is a 76-amino-acid chain: cAMP-dependent protein kinase inhibitor alpha (76 aa).

An N-acetylthreonine modification is found at Thr-2. Positions 49-76 are disordered; that stretch reads KTEGEEDAQRNSTEQSGEAQGEAAKSES.

The protein belongs to the PKI family.

Functionally, extremely potent competitive inhibitor of cAMP-dependent protein kinase activity, this protein interacts with the catalytic subunit of the enzyme after the cAMP-induced dissociation of its regulatory chains. The polypeptide is cAMP-dependent protein kinase inhibitor alpha (PKIA) (Bos taurus (Bovine)).